The primary structure comprises 258 residues: GTP cyclohydrolase FolE2 (258 aa).

It belongs to the GTP cyclohydrolase IV family.

It catalyses the reaction GTP + H2O = 7,8-dihydroneopterin 3'-triphosphate + formate + H(+). It functions in the pathway cofactor biosynthesis; 7,8-dihydroneopterin triphosphate biosynthesis; 7,8-dihydroneopterin triphosphate from GTP: step 1/1. Its function is as follows. Converts GTP to 7,8-dihydroneopterin triphosphate. The chain is GTP cyclohydrolase FolE2 from Geobacter sulfurreducens (strain ATCC 51573 / DSM 12127 / PCA).